The chain runs to 101 residues: Urease subunit beta (101 aa).

Belongs to the urease beta subunit family. As to quaternary structure, heterotrimer of UreA (gamma), UreB (beta) and UreC (alpha) subunits. Three heterotrimers associate to form the active enzyme.

It localises to the cytoplasm. The catalysed reaction is urea + 2 H2O + H(+) = hydrogencarbonate + 2 NH4(+). It functions in the pathway nitrogen metabolism; urea degradation; CO(2) and NH(3) from urea (urease route): step 1/1. The protein is Urease subunit beta of Chelativorans sp. (strain BNC1).